A 280-amino-acid polypeptide reads, in one-letter code: Undecaprenyl-diphosphatase (280 aa).

8 helical membrane-spanning segments follow: residues 3-23 (IILLIQAVIMGIVEGITEFLP), 45-65 (VDLFVVVVQFGAILAVIYDYW), 88-108 (QLGLSLIVATIPVMIVGFTFA), 115-135 (LFDPIVVAIMLIIGGLLIFYV), 150-170 (VGLKTALMIGLFQCLALIPGT), 191-211 (AEFSFFLGIPVIVGAALLDLL), 225-245 (VLGIGTVVSFIVALLCIRLLV), and 255-275 (IFAWLRIITGVLVLIAAWGFG).

It belongs to the UppP family.

It is found in the cell inner membrane. It carries out the reaction di-trans,octa-cis-undecaprenyl diphosphate + H2O = di-trans,octa-cis-undecaprenyl phosphate + phosphate + H(+). Functionally, catalyzes the dephosphorylation of undecaprenyl diphosphate (UPP). Confers resistance to bacitracin. This chain is Undecaprenyl-diphosphatase, found in Psychrobacter arcticus (strain DSM 17307 / VKM B-2377 / 273-4).